We begin with the raw amino-acid sequence, 521 residues long: Bifunctional purine biosynthesis protein PurH (521 aa).

Positions 1 to 147 (MAVIKRALIS…KNNRDVTVVV (147 aa)) constitute an MGS-like domain.

The protein belongs to the PurH family.

The enzyme catalyses (6R)-10-formyltetrahydrofolate + 5-amino-1-(5-phospho-beta-D-ribosyl)imidazole-4-carboxamide = 5-formamido-1-(5-phospho-D-ribosyl)imidazole-4-carboxamide + (6S)-5,6,7,8-tetrahydrofolate. It carries out the reaction IMP + H2O = 5-formamido-1-(5-phospho-D-ribosyl)imidazole-4-carboxamide. It functions in the pathway purine metabolism; IMP biosynthesis via de novo pathway; 5-formamido-1-(5-phospho-D-ribosyl)imidazole-4-carboxamide from 5-amino-1-(5-phospho-D-ribosyl)imidazole-4-carboxamide (10-formyl THF route): step 1/1. It participates in purine metabolism; IMP biosynthesis via de novo pathway; IMP from 5-formamido-1-(5-phospho-D-ribosyl)imidazole-4-carboxamide: step 1/1. This chain is Bifunctional purine biosynthesis protein PurH, found in Syntrophotalea carbinolica (strain DSM 2380 / NBRC 103641 / GraBd1) (Pelobacter carbinolicus).